A 56-amino-acid polypeptide reads, in one-letter code: Large ribosomal subunit protein bL32 (56 aa).

The segment covering 1–16 has biased composition (basic residues); the sequence is MAVQKNKKSRSKRGMR. Residues 1 to 36 are disordered; that stretch reads MAVQKNKKSRSKRGMRRSHDSLSTPQLSVDSTSGEL. Residues 21–34 are compositionally biased toward polar residues; sequence SLSTPQLSVDSTSG.

It belongs to the bacterial ribosomal protein bL32 family.

The protein is Large ribosomal subunit protein bL32 of Shewanella sediminis (strain HAW-EB3).